The following is a 291-amino-acid chain: MAVPVVQAVQAVHLESDAFLVCLNHALSTEKEEVMGLCIGELNDDVRSESKFAHAGSDVCTVPEKVDSIRVVHIHSVIILRRSDKRKDRVEISPEQLSAASTEAERLAELTGRPMRVVGWYHSHPHITVWPSHVDVRTQAMYQMMDQGFVGLIFSCFIEDKNTKTGRVLYTCFQSVQAQKSSDYERIEIPVHVVPHVTIGKVCLESAVELPKILCQEEQDAYRRIHSLTHLDSVTKIHNGSVFTKNLCSQMSAVSGPLLQWLEDRLEQNQQHLRELQREKEELMAELRSLE.

At A2 the chain carries N-acetylalanine. Positions V12–Q179 constitute an MPN domain. The Zn(2+) site is built by H122, H124, and D135. The short motif at H122–D135 is the JAMM motif element. S233 bears the Phosphoserine mark.

This sequence belongs to the peptidase M67A family. BRCC36 subfamily. As to quaternary structure, component of the ARISC complex, at least composed of UIMC1/RAP80, ABRAXAS1, BRCC3/BRCC36, BABAM2 and BABAM1/NBA1. Component of the BRCA1-A complex, at least composed of BRCA1, BARD1, UIMC1/RAP80, ABRAXAS1, BRCC3/BRCC36, BABAM2 and BABAM1/NBA1. In the BRCA1-A complex, interacts directly with ABRAXAS1 and BABAM2. Component of the BRISC complex, at least composed of ABRAXAS2, BRCC3/BRCC36, BABAM2 and BABAM1/NBA1. Identified in a complex with SHMT2 and the other subunits of the BRISC complex. In the BRISC complex, interacts directly with ABRAXAS2. Identified in a complex with ABRAXAS2 and NUMA1. The BRISC complex interacts with the CSN complex. Component of the BRCA1/BRCA2 containing complex (BRCC), which also contains BRCA1, BRCA2, BARD1, BABAM2 and RAD51. BRCC is a ubiquitin E3 ligase complex that enhances cellular survival following DNA damage. Interacts with BRCA1. Binds polyubiquitin. Interacts with PWWP2B. Interacts with HDAC1; this interaction is enhanced in the presence of PWWP2B. It depends on Zn(2+) as a cofactor.

It localises to the nucleus. The protein localises to the cytoplasm. The protein resides in the cytoskeleton. Its subcellular location is the spindle pole. In terms of biological role, metalloprotease that specifically cleaves 'Lys-63'-linked polyubiquitin chains. Does not have activity toward 'Lys-48'-linked polyubiquitin chains. Component of the BRCA1-A complex, a complex that specifically recognizes 'Lys-63'-linked ubiquitinated histones H2A and H2AX at DNA lesions sites, leading to target the BRCA1-BARD1 heterodimer to sites of DNA damage at double-strand breaks (DSBs). In the BRCA1-A complex, it specifically removes 'Lys-63'-linked ubiquitin on histones H2A and H2AX, antagonizing the RNF8-dependent ubiquitination at double-strand breaks (DSBs). Catalytic subunit of the BRISC complex, a multiprotein complex that specifically cleaves 'Lys-63'-linked ubiquitin in various substrates. Mediates the specific 'Lys-63'-specific deubiquitination associated with the COP9 signalosome complex (CSN), via the interaction of the BRISC complex with the CSN complex. The BRISC complex is required for normal mitotic spindle assembly and microtubule attachment to kinetochores via its role in deubiquitinating NUMA1. Plays a role in interferon signaling via its role in the deubiquitination of the interferon receptor IFNAR1; deubiquitination increases IFNAR1 activity by enhancing its stability and cell surface expression. Acts as a regulator of the NLRP3 inflammasome by mediating deubiquitination of NLRP3, leading to NLRP3 inflammasome assembly. Down-regulates the response to bacterial lipopolysaccharide (LPS) via its role in IFNAR1 deubiquitination. Deubiquitinates HDAC1 and PWWP2B leading to their stabilization. This Rattus norvegicus (Rat) protein is Lys-63-specific deubiquitinase BRCC36 (Brcc3).